The following is a 220-amino-acid chain: Vesicle-associated membrane protein 7 (220 aa).

N-acetylalanine is present on Ala-2. Residues 2-188 lie on the Cytoplasmic side of the membrane; sequence AILFAVVARG…ARAMCMKNLK (187 aa). In terms of domain architecture, Longin spans 7–110; that stretch reads VVARGTTILA…AMNSEFSSVL (104 aa). One can recognise a v-SNARE coiled-coil homology domain in the interval 125 to 185; sequence KVMETQAQVD…RNLARAMCMK (61 aa). A phosphoserine mark is found at Ser-167 and Ser-168. Residues 189-209 traverse the membrane as a helical; Anchor for type IV membrane protein segment; that stretch reads LTIIIIIVSIVFIYIIVSPLC. Topologically, residues 210 to 220 are vesicular; sequence GGFTWPSCVKK.

Belongs to the synaptobrevin family. Component of the SNARE complex composed of STX4, SNAP23 and VAMP7 that binds SYT7 during lysosomal exocytosis. Component of the SNARE complex composed of STX7, STX8, VAMP7 and VTI1B that is required for heterotypic fusion of late endosomes with lysosomes in liver cells. May interact with STX17. Interacts with PICALM. Interacts with RAB21.

It localises to the cytoplasmic vesicle. The protein resides in the secretory vesicle membrane. The protein localises to the golgi apparatus. It is found in the trans-Golgi network membrane. Its subcellular location is the late endosome membrane. It localises to the lysosome membrane. The protein resides in the endoplasmic reticulum membrane. The protein localises to the phagosome membrane. It is found in the synapse. Its subcellular location is the synaptosome. Its function is as follows. Involved in the targeting and/or fusion of transport vesicles to their target membrane during transport of proteins from the early endosome to the lysosome. Required for heterotypic fusion of late endosomes with lysosomes and homotypic lysosomal fusion. Required for calcium regulated lysosomal exocytosis. Involved in the export of chylomicrons from the endoplasmic reticulum to the cis Golgi. Required for exocytosis of mediators during eosinophil and neutrophil degranulation, and target cell killing by natural killer cells. Required for focal exocytosis of late endocytic vesicles during phagosome formation. This is Vesicle-associated membrane protein 7 (VAMP7) from Pongo abelii (Sumatran orangutan).